The chain runs to 220 residues: GTP-binding protein YPT53 (220 aa).

Residues 19–26 (GESAVGKS), 67–71 (DTAGQ), and 125–128 (NKMD) each bind GTP. S-geranylgeranyl cysteine attachment occurs at residues C218 and C220. The residue at position 220 (C220) is a Cysteine methyl ester.

Belongs to the small GTPase superfamily. Rab family.

It is found in the cell membrane. Its function is as follows. Required for transport in the endocytic pathway and for correct sorting of the vacuolar hydrolases suggesting a possible intersection of the endocytic with the vacuolar sorting pathway. May be involved in recruiting the MON1-CCZ1 complex to membranes enriched in phosphatidylinositol 3-phosphate (PtdIns[3]P) or other charged lipids, leading to recruitment of YPT7. In Saccharomyces cerevisiae (strain ATCC 204508 / S288c) (Baker's yeast), this protein is GTP-binding protein YPT53 (YPT53).